A 1044-amino-acid chain; its full sequence is Eukaryotic translation initiation factor 3 subunit A (1044 aa).

The stretch at 92-121 (LKKFIELAEKKVTEAQAKADEIQSSLESAA) forms a coiled coil. The region spanning 339–523 (MTKAASFVLL…GVLTFDTDIF (185 aa)) is the PCI domain. Residues 611–907 (IDKKKEAATD…EARRAARKAG (297 aa)) are a coiled coil. Positions 797-901 (SEKRHEEFEK…QREEEAEARR (105 aa)) are enriched in basic and acidic residues. Positions 797–1044 (SEKRHEEFEK…WVPRWKQQQS (248 aa)) are disordered. 2 stretches are compositionally biased toward low complexity: residues 943 to 956 (KEAA…AAPA) and 1006 to 1017 (SSSSQPPSRTQT).

This sequence belongs to the eIF-3 subunit A family. As to quaternary structure, component of the eukaryotic translation initiation factor 3 (eIF-3) complex.

It localises to the cytoplasm. Its function is as follows. RNA-binding component of the eukaryotic translation initiation factor 3 (eIF-3) complex, which is involved in protein synthesis of a specialized repertoire of mRNAs and, together with other initiation factors, stimulates binding of mRNA and methionyl-tRNAi to the 40S ribosome. The eIF-3 complex specifically targets and initiates translation of a subset of mRNAs involved in cell proliferation. The sequence is that of Eukaryotic translation initiation factor 3 subunit A (tif32) from Aspergillus clavatus (strain ATCC 1007 / CBS 513.65 / DSM 816 / NCTC 3887 / NRRL 1 / QM 1276 / 107).